The sequence spans 671 residues: Polyadenylate-binding protein 8 (671 aa).

RRM domains are found at residues 45-123 (TSLY…YSVR), 133-210 (GNIF…PFVH), 224-301 (TNVY…KAQK), and 327-404 (SNLY…LAQR). The interval 467-526 (LVPGMRPGGSPMPNFFMPMMQQGQQQQQQQQQQQRPGGGRRGALPQPQQPSPMMQQQMHP) is disordered. Low complexity-rich tracts occupy residues 483–501 (MPMMQQGQQQQQQQQQQQR) and 508–525 (GALPQPQQPSPMMQQQMH). Residues 573–650 (PIVALATRLA…AMDVLRSVAQ (78 aa)) form the PABC domain.

It belongs to the polyadenylate-binding protein type-1 family. As to quaternary structure, interacts with ERD15/CID1. Interacts with Turnip mosaic virus (TuMV) VPg-Pro and RNA-dependent RNA polymerase (RdRp). In terms of tissue distribution, expressed predominantly in immature flowers.

It localises to the cytoplasm. The protein localises to the nucleus. Binds the poly(A) tail of mRNA. Appears to be an important mediator of the multiple roles of the poly(A) tail in mRNA biogenesis, stability and translation. During infection with potyvirus TuMV, acts as a potential integral component of the viral replicase complex that could play an important role in the regulation of potyviral RNA-dependent RNA polymerase (RdRp). This chain is Polyadenylate-binding protein 8 (PAB8), found in Arabidopsis thaliana (Mouse-ear cress).